The chain runs to 208 residues: Large ribosomal subunit protein bL25 (208 aa).

A disordered region spans residues 178-208; that stretch reads LPPQQSEVPEPDSEEEPKEPEAIKEKDNDGE. Over residues 186 to 195 the composition is skewed to acidic residues; the sequence is PEPDSEEEPK. Basic and acidic residues predominate over residues 196–208; sequence EPEAIKEKDNDGE.

It belongs to the bacterial ribosomal protein bL25 family. CTC subfamily. Part of the 50S ribosomal subunit; part of the 5S rRNA/L5/L18/L25 subcomplex. Contacts the 5S rRNA. Binds to the 5S rRNA independently of L5 and L18.

Functionally, this is one of the proteins that binds to the 5S RNA in the ribosome where it forms part of the central protuberance. In Bacillus pumilus (strain SAFR-032), this protein is Large ribosomal subunit protein bL25.